We begin with the raw amino-acid sequence, 217 residues long: Growth hormone variant (217 aa).

The first 26 residues, 1–26 (MAAGSRTSLLLAFGLLCLSWLQEGSA), serve as a signal peptide directing secretion. Cystine bridges form between C79/C191 and C208/C215. At S132 the chain carries Phosphoserine. The N-linked (GlcNAc...) asparagine glycan is linked to N166. S176 bears the Phosphoserine mark.

Belongs to the somatotropin/prolactin family. As to quaternary structure, monomer, dimer, trimer, tetramer and pentamer, disulfide-linked or non-covalently associated, in homomeric and heteromeric combinations. Can also form a complex either with GHBP or with the alpha2-macroglobulin complex. In terms of tissue distribution, expressed in the placenta.

The protein resides in the secreted. Functionally, plays an important role in growth control. Its major role in stimulating body growth is to stimulate the liver and other tissues to secrete IGF1. It stimulates both the differentiation and proliferation of myoblasts. It also stimulates amino acid uptake and protein synthesis in muscle and other tissues. This Homo sapiens (Human) protein is Growth hormone variant (GH2).